Consider the following 658-residue polypeptide: Outer dynein arm-docking complex subunit 1 (658 aa).

Coiled-coil stretches lie at residues 11 to 156 (KEVH…RYLN), 186 to 234 (REEA…KNDE), and 303 to 380 (NFIN…TDIQ). Disordered stretches follow at residues 496 to 552 (DEEE…SVSH) and 574 to 658 (GAPV…RGYN). Phosphoserine is present on residues Ser500, Ser506, Ser507, and Ser509. 4 stretches are compositionally biased toward low complexity: residues 506 to 519 (SSPS…QISL), 574 to 583 (GAPVSSRSSQ), 592 to 604 (TSSS…TGYL), and 621 to 639 (SMGS…HASS).

This sequence belongs to the ODA1/DCC2 family. Component of the outer dynein arm-docking complex along with ODAD2, ODAD3, ODAD4 and CLXN. Interacts with ODAD3. Interacts with ODAD4; this interaction may facilitate the recruitment and/or attachment of outer dynein arm docking complex proteins including ODAD1, ODAD3, and ODAD4 to ciliary axonemes. Interacts with DNAH9. Interacts with MNS1. Interacts with PIERCE1 and PIERCE2; the interactions link the outer dynein arms docking complex (ODA-DC) to the internal microtubule inner proteins (MIP) in cilium axoneme. As to expression, expressed in motile ciliated tissues.

The protein localises to the cytoplasm. It localises to the cytoskeleton. Its subcellular location is the cilium axoneme. In terms of biological role, component of the outer dynein arm-docking complex that mediates outer dynein arms (ODA) binding onto the doublet microtubule. Involved in mediating assembly of both ODAs and their axonemal docking complex onto ciliary microtubules. In Mus musculus (Mouse), this protein is Outer dynein arm-docking complex subunit 1 (Odad1).